The sequence spans 143 residues: Large ribosomal subunit protein uL16 (143 aa).

Belongs to the universal ribosomal protein uL16 family. In terms of assembly, part of the 50S ribosomal subunit.

Functionally, binds 23S rRNA and is also seen to make contacts with the A and possibly P site tRNAs. The chain is Large ribosomal subunit protein uL16 from Caulobacter vibrioides (strain ATCC 19089 / CIP 103742 / CB 15) (Caulobacter crescentus).